The following is a 388-amino-acid chain: Processive diacylglycerol beta-glucosyltransferase (388 aa).

The protein belongs to the glycosyltransferase 28 family. UgtP subfamily.

It localises to the cell membrane. The enzyme catalyses a 1,2-diacyl-3-O-(beta-D-glucopyranosyl)-sn-glycerol + UDP-alpha-D-glucose = a 1,2-diacyl-3-O-(beta-D-Glc-(1-&gt;6)-beta-D-Glc)-sn-glycerol + UDP + H(+). It catalyses the reaction a 1,2-diacyl-3-O-(beta-D-Glc-(1-&gt;6)-beta-D-Glc)-sn-glycerol + UDP-alpha-D-glucose = a 1,2-diacyl-3-O-(beta-D-Glc-(1-&gt;6)-beta-D-Glc-(1-&gt;6)-beta-D-Glc)-sn-glycerol + UDP + H(+). The catalysed reaction is a 1,2-diacyl-sn-glycerol + UDP-alpha-D-glucose = a 1,2-diacyl-3-O-(beta-D-glucopyranosyl)-sn-glycerol + UDP + H(+). It functions in the pathway glycolipid metabolism; diglucosyl-diacylglycerol biosynthesis. Processive glucosyltransferase involved in the biosynthesis of both the bilayer- and non-bilayer-forming membrane glucolipids. Is able to successively transfer up to three glucosyl residues to diacylglycerol (DAG), thereby catalyzing the formation of beta-monoglucosyl-DAG (3-O-(beta-D-glucopyranosyl)-1,2-diacyl-sn-glycerol), beta-diglucosyl-DAG (3-O-(beta-D-glucopyranosyl-beta-(1-&gt;6)-D-glucopyranosyl)-1,2-diacyl-sn-glycerol) and beta-triglucosyl-DAG (3-O-(beta-D-glucopyranosyl-beta-(1-&gt;6)-D-glucopyranosyl-beta-(1-&gt;6)-D-glucopyranosyl)-1,2-diacyl-sn-glycerol). Beta-diglucosyl-DAG is the predominant glycolipid found in Bacillales and is also used as a membrane anchor for lipoteichoic acid (LTA). The protein is Processive diacylglycerol beta-glucosyltransferase of Bacillus cereus (strain ZK / E33L).